The chain runs to 61 residues: MTKGTPSFGRMSRGKTHIRCPRCGRHSYNIVKGYCAACGYGRSRRIKRGLAKVLGRPVGNR.

Cysteine 20, cysteine 23, cysteine 35, and cysteine 38 together coordinate Zn(2+). The C4-type zinc finger occupies cysteine 20 to cysteine 38.

Belongs to the eukaryotic ribosomal protein eL37 family. It depends on Zn(2+) as a cofactor.

Functionally, binds to the 23S rRNA. This chain is Large ribosomal subunit protein eL37, found in Caldivirga maquilingensis (strain ATCC 700844 / DSM 13496 / JCM 10307 / IC-167).